The chain runs to 137 residues: Altered inheritance of mitochondria protein 11 (137 aa).

The next 2 membrane-spanning stretches (helical) occupy residues 20–37 (YGAAAFTLITMRLISRAI) and 66–88 (LTYASAASIGTFSTLIFGFCWAL).

This sequence belongs to the AIM11 family.

It localises to the membrane. This Saccharomyces cerevisiae (strain YJM789) (Baker's yeast) protein is Altered inheritance of mitochondria protein 11 (AIM11).